The primary structure comprises 285 residues: 2,3,4,5-tetrahydropyridine-2,6-dicarboxylate N-succinyltransferase (285 aa).

Arg-111 and Asp-148 together coordinate substrate.

It belongs to the transferase hexapeptide repeat family. As to quaternary structure, homotrimer.

It localises to the cytoplasm. The enzyme catalyses (S)-2,3,4,5-tetrahydrodipicolinate + succinyl-CoA + H2O = (S)-2-succinylamino-6-oxoheptanedioate + CoA. Its pathway is amino-acid biosynthesis; L-lysine biosynthesis via DAP pathway; LL-2,6-diaminopimelate from (S)-tetrahydrodipicolinate (succinylase route): step 1/3. The sequence is that of 2,3,4,5-tetrahydropyridine-2,6-dicarboxylate N-succinyltransferase from Allorhizobium ampelinum (strain ATCC BAA-846 / DSM 112012 / S4) (Agrobacterium vitis (strain S4)).